Reading from the N-terminus, the 601-residue chain is MMRSRSKSPRRPSPTARGANCDVELLKTTTRDREELKCMLEKYERHLAEIQGNVKVLTSERDKTFLLYEQAQEEIARLRREMKSLARKAMDTESELGRQKAENNSLRLLYENTEKDLSDTQRHLAKKKYELQLTQEKIMCLDEKIDNFTRQNIAQREEISILGGTLNDLAKEKECLQACLDKKSENIASLGESLAMKEKTISGMKNIIAEMEQASRQSTEALIMCEQDISRMRRQLDETNDELAQIARERDILAHDNDNLQEQFAKAKQENQALSKKLNDTHNELNDIKQKVQDTNLEVNKLKNILKSEESENRQMMEQLRKANEDAENWENKARQSEADNNTLKLELITAEAEGNRLKEKVDSLSREVEQHLNAERSYKSQISTLHKSVVKMEEELQKVQFEKVSALADLSSTRELCIKLDSSKELLNRQLVAKDQEIEMMENELDSARSEIELLRSQMTNERISMQNLEALLVANRDKEYQSQIALQEKESEIQLLKEHLCLAENKMAIQSRDVAQFRNVVTQLEADLDITKRQLGTERFERERAVQELRRQNYSSNAYHVSSTMKPNTKCHSPERAHHRSPDRGLDRSLEENLCYRDF.

Positions 1-10 (MMRSRSKSPR) are enriched in basic residues. Disordered regions lie at residues 1 to 20 (MMRS…RGAN) and 563 to 588 (VSST…DRGL). An interaction with HIF1A region spans residues 459 to 592 (QMTNERISMQ…SPDRGLDRSL (134 aa)). The span at 563-573 (VSSTMKPNTKC) shows a compositional bias: polar residues. The span at 574–588 (HSPERAHHRSPDRGL) shows a compositional bias: basic and acidic residues. S591 bears the Phosphoserine mark.

The protein belongs to the CEP135/TSGA10 family. In terms of assembly, interacts with HIF1A. Processed into N-terminal 27-kDa and C-terminal 55-kDa fragments.

It localises to the cytoplasm. Its subcellular location is the cytoskeleton. The protein resides in the microtubule organizing center. It is found in the centrosome. The protein localises to the centriole. Plays a role in spermatogenesis. When overexpressed, prevents nuclear localization of HIF1A. This chain is Testis-specific gene 10 protein (TSGA10), found in Macaca fascicularis (Crab-eating macaque).